A 662-amino-acid chain; its full sequence is Forkhead box protein O1 (662 aa).

Disordered regions lie at residues 1 to 62 and 122 to 165; these read MAEA…PSAS and GCLH…SRRN. Position 24 is a phosphothreonine; by PKB/AKT1 or PKB/AKT2 and SGK1 (Thr24). Over residues 33 to 62 the composition is skewed to low complexity; sequence SQSNSATSSPAPSGGAAANPDAAAGLPSAS. A compositionally biased stretch (pro residues) spans 126–146; it reads PAPPQQPPPPGPLSQHPPVPP. The fork-head DNA-binding region spans 167–261; the sequence is WGNLSYADLI…KSGKSPRRRA (95 aa). DNA-binding regions lie at residues 218 to 225 and 241 to 244; these read NSIRHNLS and SSWW. At Ser219 the chain carries Phosphoserine; by STK4/MST1. Ser225, Ser241, and Ser242 each carry phosphoserine. The segment at 241–342 is disordered; that stretch reads SSWWMLNPEG…GRLSPIMTEQ (102 aa). N6-acetyllysine is present on residues Lys252 and Lys255. Ser256 carries the post-translational modification Phosphoserine; by CDK1. Omega-N-methylarginine; by PRMT1 occurs at positions 258 and 260. Positions 258–260 match the Nuclear localization signal motif; sequence RRR. At Ser263 the chain carries Phosphoserine; by PKB/AKT1 and SGK1. 3 positions are modified to N6-acetyllysine: Lys269, Lys272, and Lys281. Residues 271–282 show a composition bias toward basic residues; that stretch reads AKSRGRAAKKKA. The sufficient for interaction with NLK stretch occupies residues 290–570; that stretch reads GAGDSPGSQF…RLTQEKTALQ (281 aa). Ser294 and Ser305 each carry phosphoserine. Over residues 316-333 the composition is skewed to polar residues; that stretch reads NWSTFRPRTSSNASTISG. A Phosphoserine; by PKB/AKT1 modification is found at Ser326. Ser329 carries the phosphoserine; by CK1 and SGK1 modification. Ser332 carries the phosphoserine; by CK1 modification. Residue Ser336 is modified to Phosphoserine; by DYRK1A. Thr340 is subject to Phosphothreonine. The segment at 370 to 466 is required for interaction with RUNX2; it reads SEISNPENME…GGMAQYNCAA (97 aa). Lys430 carries the N6-acetyllysine modification. The Required for interaction with SIRT1 motif lies at 469–473; sequence LKELL.

As to quaternary structure, interacts with LRPPRC. Interacts with RUNX2; the interaction inhibits RUNX2 transcriptional activity and mediates the IGF1/insulin-dependent BGLAP expression in osteoblasts Interacts with PPP2R1A; the interaction regulates the dephosphorylation of FOXO1 at Thr-24 and Ser-263 leading to its nuclear import. Interacts with NLK. Interacts with SIRT1; the interaction results in the deacetylation of FOXO1 leading to activation of FOXO1-mediated transcription of genes involved in DNA repair and stress resistance. Binds to CDK1. Interacts with the 14-3-3 proteins, YWHAG and YWHAZ; the interactions require insulin-stimulated phosphorylation on Thr-24, promote nuclear exit and loss of transcriptional activity. Interacts with SKP2; the interaction ubiquitinates FOXO1 leading to its proteasomal degradation. The interaction requires the presence of KRIT1. Interacts (via the C-terminal half) with ATF4 (via its DNA binding domain); the interaction occurs in osteoblasts, regulates glucose homeostasis via suppression of beta-cell proliferation and subsequent decrease in insulin production. Interacts with PRMT1; the interaction methylates FOXO1, prevents PKB/AKT1 phosphorylation and retains FOXO1 in the nucleus. Interacts with EP300 and CREBBP; the interactions acetylate FOXO1. Interacts with SIRT2; the interaction is disrupted in response to oxidative stress or serum deprivation, leading to increased level of acetylated FOXO1, which promotes stress-induced autophagy by stimulating E1-like activating enzyme ATG7. Interacts (acetylated form) with ATG7; the interaction is increased in response to oxidative stress or serum deprivation and promotes the autophagic process leading to cell death. Interacts (acetylated form) with PPARG. Interacts with XBP1; this interaction is direct and leads to FOXO1 ubiquitination and degradation via the proteasome pathway. Interacts (via the Fork-head domain) with CEBPA; the interaction increases when FOXO1 is deacetylated. Interacts with WDFY2. Forms a complex with WDFY2 and AKT1. Interacts with CRY1. Interacts with PPIA/CYPA; the interaction promotes FOXO1 dephosphorylation, nuclear accumulation and transcriptional activity. Interacts with TOX4; FOXO1 is required for full induction of TOX4-dependent activity and the interaction is inhibited by insulin. Interacts (when phosphorylated on Ser-263) with STUB1/CHIP. Phosphorylation by NLK promotes nuclear export and inhibits the transcriptional activity. In response to growth factors, phosphorylation on Thr-24, Ser-263 and Ser-326 by PKB/AKT1 promotes nuclear export and inactivation of transactivational activity. Phosphorylation on Thr-24 is required for binding 14-3-3 proteins. Phosphorylation of Ser-263 decreases DNA-binding activity and promotes the phosphorylation of Thr-24 and Ser-326, permitting phosphorylation of Ser-329 and Ser-332, probably by CDK1, leading to nuclear exclusion and loss of function. Stress signals, such as response to oxygen or nitric oxide, attenuate the PKB/AKT1-mediated phosphorylation leading to nuclear retention. Phosphorylation of Ser-336 is independent of IGF1 and leads to reduced function. Dephosphorylated on Thr-24 and Ser-263 by PP2A in beta-cells under oxidative stress leading to nuclear retention. Phosphorylation of Ser-256 by CDK1 disrupts binding of 14-3-3 proteins leading to nuclear accumulation and has no effect on DNA binding nor transcriptional activity. Phosphorylation by STK4/MST1 on Ser-219, upon oxidative stress, inhibits binding to 14-3-3 proteins and nuclear export. PPIA/CYPA promotes its dephosphorylation on Ser-263. In terms of processing, ubiquitinated by SKP2. Ubiquitination leads to proteasomal degradation. Ubiquitinated by STUB1/CHIP; when Ser-263 is phosphorylated. Post-translationally, methylation inhibits AKT1-mediated phosphorylation at Ser-263 and is increased by oxidative stress. Acetylated. Acetylation at Lys-269 and Lys-281 are necessary for autophagic cell death induction. Deacetylated by SIRT2 in response to oxidative stress or serum deprivation, thereby negatively regulating FOXO1-mediated autophagic cell death. Once in the nucleus, acetylated by CREBBP/EP300. Acetylation diminishes the interaction with target DNA and attenuates the transcriptional activity. It increases the phosphorylation at Ser-263. Deacetylation by SIRT1 results in reactivation of the transcriptional activity. Oxidative stress by hydrogen peroxide treatment appears to promote deacetylation and uncoupling of insulin-induced phosphorylation. By contrast, resveratrol acts independently of acetylation. Acetylated at Lys-430, promoting its localization to the nucleus and transcription factor activity. Deacetylation at Lys-430 by SIRT6, promotes its translocation into the cytoplasm, preventing its transcription factor activity. Deacetylation and subsequent inhibition by SIRT6 has different effects depending on cell types: it inhibits gluconeogenesis in hepatocytes, promotes glucose sensing in pancreatic beta-cells and regulates lipid catabolism in brown adipocytes. Highly in subcutaneous adipose and visceral adipose tissues. Levels higher in piglets than in adults. Also expressed at lower levels in liver and muscle.

It is found in the cytoplasm. The protein resides in the nucleus. In terms of biological role, transcription factor that is the main target of insulin signaling and regulates metabolic homeostasis in response to oxidative stress. Binds to the insulin response element (IRE) with consensus sequence 5'-TT[G/A]TTTTG-3' and the related Daf-16 family binding element (DBE) with consensus sequence 5'-TT[G/A]TTTAC-3'. Activity suppressed by insulin. Main regulator of redox balance and osteoblast numbers and controls bone mass. Orchestrates the endocrine function of the skeleton in regulating glucose metabolism. Also acts as a key regulator of chondrogenic commitment of skeletal progenitor cells in response to lipid availability: when lipids levels are low, translocates to the nucleus and promotes expression of SOX9, which induces chondrogenic commitment and suppresses fatty acid oxidation. Acts synergistically with ATF4 to suppress osteocalcin/BGLAP activity, increasing glucose levels and triggering glucose intolerance and insulin insensitivity. Also suppresses the transcriptional activity of RUNX2, an upstream activator of osteocalcin/BGLAP. Acts as an inhibitor of glucose sensing in pancreatic beta cells by acting as a transcription repressor and suppressing expression of PDX1. In hepatocytes, promotes gluconeogenesis by acting together with PPARGC1A and CEBPA to activate the expression of genes such as IGFBP1, G6PC1 and PCK1. Also promotes gluconeogenesis by directly promoting expression of PPARGC1A and G6PC1. Important regulator of cell death acting downstream of CDK1, PKB/AKT1 and STK4/MST1. Promotes neural cell death. Mediates insulin action on adipose tissue. Regulates the expression of adipogenic genes such as PPARG during preadipocyte differentiation and, adipocyte size and adipose tissue-specific gene expression in response to excessive calorie intake. Regulates the transcriptional activity of GADD45A and repair of nitric oxide-damaged DNA in beta-cells. Required for the autophagic cell death induction in response to starvation or oxidative stress in a transcription-independent manner. Mediates the function of MLIP in cardiomyocytes hypertrophy and cardiac remodeling. Positive regulator of apoptosis in cardiac smooth muscle cells as a result of its transcriptional activation of pro-apoptotic genes. Regulates endothelial cell (EC) viability and apoptosis in a PPIA/CYPA-dependent manner via transcription of CCL2 and BCL2L11 which are involved in EC chemotaxis and apoptosis. The polypeptide is Forkhead box protein O1 (FOXO1) (Sus scrofa (Pig)).